The following is a 579-amino-acid chain: Protein downstream neighbor of son homolog (579 aa).

Disordered stretches follow at residues 1–68 and 331–379; these read MAEL…RRNP and FSQP…DESF. Basic and acidic residues predominate over residues 339-348; sequence DTGKKQKKPE. Acidic residues predominate over residues 365 to 378; that stretch reads EADEASDESDEDES.

The protein belongs to the DONSON family. Component of the replisome complex.

The protein localises to the nucleus. Its function is as follows. Replisome component that maintains genome stability by protecting stalled or damaged replication forks. After the induction of replication stress, required for the stabilization of stalled replication forks, the efficient activation of the intra-S-phase and G/2M cell-cycle checkpoints and the maintenance of genome stability. The polypeptide is Protein downstream neighbor of son homolog (Xenopus laevis (African clawed frog)).